Reading from the N-terminus, the 37-residue chain is Potassium channel toxin alpha-KTx 4.3 (37 aa).

3 disulfide bridges follow: cysteine 7/cysteine 28, cysteine 13/cysteine 33, and cysteine 17/cysteine 35. Residues 26–33 (GKCMNGKC) form an interaction with Ca(2+)-activated K(+) channels region.

As to expression, expressed by the venom gland.

The protein localises to the secreted. Functionally, blocks reversibly Shaker B potassium-channels. The sequence is that of Potassium channel toxin alpha-KTx 4.3 from Tityus discrepans (Venezuelan scorpion).